A 341-amino-acid chain; its full sequence is Methionine import ATP-binding protein MetN (341 aa).

Positions 2–241 constitute an ABC transporter domain; it reads IELNQVVKRY…PQHEVTRRFV (240 aa). 38–45 is an ATP binding site; that stretch reads GFSGAGKS.

This sequence belongs to the ABC transporter superfamily. Methionine importer (TC 3.A.1.24) family. In terms of assembly, the complex is composed of two ATP-binding proteins (MetN), two transmembrane proteins (MetI) and a solute-binding protein (MetQ).

The protein resides in the cell membrane. The catalysed reaction is L-methionine(out) + ATP + H2O = L-methionine(in) + ADP + phosphate + H(+). It carries out the reaction D-methionine(out) + ATP + H2O = D-methionine(in) + ADP + phosphate + H(+). Part of the ABC transporter complex MetNIQ involved in methionine import. Responsible for energy coupling to the transport system. In Staphylococcus haemolyticus (strain JCSC1435), this protein is Methionine import ATP-binding protein MetN.